The primary structure comprises 223 residues: Transmembrane protein 126 (223 aa).

At 1-39 (MALSRAKPDELPRDAVVITEDQALKYQWKIITSWDKIGE) the chain is on the mitochondrial matrix side. A helical transmembrane segment spans residues 40–62 (VWSLRYTPGILSALAAGTGAYIN). Over 63-78 (NHYRTKLRLGGHGRLS) the chain is Mitochondrial intermembrane. Residues 79–99 (TYLPIVAVPAIFTMLAHKFFI) traverse the membrane as a helical segment. At 100–123 (QRPILLNPLGECPVCIQMRSAAFQ) the chain is on the mitochondrial matrix side. The chain crosses the membrane as a helical span at residues 124–144 (TSLGIVYPTILAPFAAFLFAT). Residues 145-171 (RCYTYRIPSITENPREVFLLWRKFTRP) are Mitochondrial intermembrane-facing. A helical membrane pass occupies residues 172–192 (IVPALGTLIGLQALLTMFLTG). Residues 193–223 (QEDKQNFKLMLRMREIEHQVEEEHLPQRMDF) are Mitochondrial matrix-facing.

The protein belongs to the TMEM126 family. Associates with mitochondrial complex I assembly intermediates during its biogenesis.

Its subcellular location is the mitochondrion membrane. In terms of biological role, as part of the MCIA complex, involved in the assembly of the mitochondrial complex I. The chain is Transmembrane protein 126 from Drosophila melanogaster (Fruit fly).